A 268-amino-acid chain; its full sequence is Bidirectional sugar transporter N3 (268 aa).

Residues 1–7 (MAISHNT) lie on the Extracellular side of the membrane. The helical transmembrane segment at 8–28 (LAFTFGMLGNVISFLVFLAPI) threads the bilayer. The MtN3/slv 1 domain maps to 10 to 96 (FTFGMLGNVI…ILYIIYAPRD (87 aa)). The Cytoplasmic segment spans residues 29 to 42 (STFYRIYKKKSTEG). The helical transmembrane segment at 43–63 (FQSLPYLVALFSSMLWLYYAL) threads the bilayer. Over 64–70 (LKKDAFL) the chain is Extracellular. A helical membrane pass occupies residues 71–91 (LITINSFGCVVETIYIILYII). Topologically, residues 92–103 (YAPRDARNLTFK) are cytoplasmic. The helical transmembrane segment at 104–124 (LLSAMNVGSFALILIVTNYAV) threads the bilayer. Residues 125–131 (HGPLRVQ) lie on the Extracellular side of the membrane. In terms of domain architecture, MtN3/slv 2 spans 131–214 (QVLGWVCVSL…QMLLYAIYRN (84 aa)). A helical transmembrane segment spans residues 132 to 152 (VLGWVCVSLSVSVFAAPLSIV). The Cytoplasmic segment spans residues 153 to 165 (AQVVRTKSVEFMP). The chain crosses the membrane as a helical span at residues 166-186 (FNLSFTLTLSATMWFGYGFFL). Residues 187-190 (KDIC) lie on the Extracellular side of the membrane. The chain crosses the membrane as a helical span at residues 191–211 (IXLPNVLGXVLGLLQMLLYAI). Residues 212 to 268 (YRNGGEKAMKKEKKAPIEPPKSIVIETQLEKIEQEKKNKDDDNEEKDKSEEPIGCGV) are Cytoplasmic-facing. Residues 234–262 (IVIETQLEKIEQEKKNKDDDNEEKDKSEE) adopt a coiled-coil conformation. Basic and acidic residues predominate over residues 243-262 (IEQEKKNKDDDNEEKDKSEE). Residues 243–268 (IEQEKKNKDDDNEEKDKSEEPIGCGV) form a disordered region.

Belongs to the SWEET sugar transporter family. Forms homooligomers and/or heterooligomers.

The protein localises to the cell membrane. Functionally, mediates both low-affinity uptake and efflux of sugar across the plasma membrane. The protein is Bidirectional sugar transporter N3 (N3) of Medicago truncatula (Barrel medic).